The chain runs to 155 residues: SsrA-binding protein (155 aa).

This sequence belongs to the SmpB family.

It localises to the cytoplasm. In terms of biological role, required for rescue of stalled ribosomes mediated by trans-translation. Binds to transfer-messenger RNA (tmRNA), required for stable association of tmRNA with ribosomes. tmRNA and SmpB together mimic tRNA shape, replacing the anticodon stem-loop with SmpB. tmRNA is encoded by the ssrA gene; the 2 termini fold to resemble tRNA(Ala) and it encodes a 'tag peptide', a short internal open reading frame. During trans-translation Ala-aminoacylated tmRNA acts like a tRNA, entering the A-site of stalled ribosomes, displacing the stalled mRNA. The ribosome then switches to translate the ORF on the tmRNA; the nascent peptide is terminated with the 'tag peptide' encoded by the tmRNA and targeted for degradation. The ribosome is freed to recommence translation, which seems to be the essential function of trans-translation. The protein is SsrA-binding protein of Streptococcus sanguinis (strain SK36).